A 522-amino-acid chain; its full sequence is Circadian clock oscillator protein KaiC (522 aa).

2 consecutive KaiC domains span residues 1 to 248 (MKKS…INIF) and 262 to 522 (ARVS…DDLL). ATP-binding residues include G50, T51, G52, K53, T54, S90, K225, L226, R227, T229, H231, T241, D242, T291, G292, T293, G294, K295, T296, and L297. T54 contributes to the Mg(2+) binding site. T296 lines the Mg(2+) pocket. E319 provides a ligand contact to Mg(2+). An ATP-binding site is contributed by W332. At S432 the chain carries Phosphoserine; by autocatalysis. Phosphothreonine; by autocatalysis is present on T433. R452, K458, M459, R460, S462, H464, and K466 together coordinate ATP.

It belongs to the KaiC family. Homohexamer; hexamerization is dependent on ATP-binding. The KaiABC complex composition changes during the circadian cycle to control KaiC phosphorylation. Complexes KaiC(6), KaiA(2-4):KaiC(6), KaiB(6):KaiC(6) and KaiC(6):KaiB(6):KaiA(12) are among the most important forms, many form cooperatively. KaiC interacts with SasA, activating its autokinase function and leading to RpaA activation. The cofactor is Mg(2+). Post-translationally, phosphorylated on serine and threonine residues by autocatalysis. Has a 4 step phosphorylation cycle; the autokinase acts first on Thr-433, then Ser-432. When Ser-432 is modified KaiC switches to an autophosphatase mode, acting first on phospho-Thr-433 then phospho-Ser-432.

The enzyme catalyses L-seryl-[protein] + ATP = O-phospho-L-seryl-[protein] + ADP + H(+). It carries out the reaction L-threonyl-[protein] + ATP = O-phospho-L-threonyl-[protein] + ADP + H(+). It catalyses the reaction ATP + H2O = ADP + phosphate + H(+). The interaction with KaiA enhances its phosphorylation status, while the interaction with KaiB decreases it. In terms of biological role, central component of the KaiABC oscillator complex, which constitutes the main circadian regulator in cyanobacteria. Complex composition changes during the circadian cycle to control KaiC phosphorylation. KaiA stimulates KaiC autophosphorylation, while KaiB sequesters KaiA, leading to KaiC autodephosphorylation. Clock output pathways impact the RpaA transcriptional regulator. KaiC enhances the autophosphorylation activity of SasA, which then transfers its phosphate group to RpaA to activate it. KaiB and KaiC together enhance the phospho-RpaA dephosphatase activity of CikA. Has a weak, temperature-independent ATPase activity; ATPase activity defines the circadian period. The phosphorylation state of KaiC modulates its ATPase activity and effects KaiB binding. The polypeptide is Circadian clock oscillator protein KaiC (Acaryochloris marina (strain MBIC 11017)).